The chain runs to 356 residues: Altered inheritance of mitochondria protein 23, mitochondrial (356 aa).

A mitochondrion-targeting transit peptide spans 1-32 (MLKVPLSDVLSQKMLFLKSFRYFHCTKYFSRD).

Belongs to the AIM23 family.

Its subcellular location is the mitochondrion. The polypeptide is Altered inheritance of mitochondria protein 23, mitochondrial (AIM23) (Saccharomyces cerevisiae (strain RM11-1a) (Baker's yeast)).